Consider the following 173-residue polypeptide: Beta-defensin 129 (173 aa).

A signal peptide spans 1–19 (MKLLFPIFASLMLQYKVNT). 3 disulfides stabilise this stretch: Cys27–Cys53, Cys34–Cys48, and Cys38–Cys54. The tract at residues 144 to 173 (STKSNIKESRDSATASPPPAPPPPNTLPTP) is disordered. A compositionally biased stretch (pro residues) spans 159–173 (SPPPAPPPPNTLPTP).

The protein belongs to the beta-defensin family.

It is found in the secreted. In terms of biological role, has antibacterial activity. This chain is Beta-defensin 129 (DEFB129), found in Hylobates lar (Lar gibbon).